The chain runs to 165 residues: Chorismate pyruvate-lyase (165 aa).

Positions 35, 77, 115, and 156 each coordinate substrate.

This sequence belongs to the UbiC family. As to quaternary structure, monomer.

The protein resides in the cytoplasm. The enzyme catalyses chorismate = 4-hydroxybenzoate + pyruvate. Its pathway is cofactor biosynthesis; ubiquinone biosynthesis. In terms of biological role, removes the pyruvyl group from chorismate, with concomitant aromatization of the ring, to provide 4-hydroxybenzoate (4HB) for the ubiquinone pathway. This Escherichia coli O157:H7 protein is Chorismate pyruvate-lyase.